A 2278-amino-acid polypeptide reads, in one-letter code: Protein Ycf2 (2278 aa).

It belongs to the Ycf2 family.

The protein localises to the plastid. The protein resides in the chloroplast stroma. It localises to the chromoplast stroma. Its function is as follows. Probable ATPase of unknown function. Its presence in a non-photosynthetic plant (Epifagus virginiana) and experiments in tobacco indicate that it has an essential function which is probably not related to photosynthesis. This is Protein Ycf2 (ycf2-A) from Solanum lycopersicum (Tomato).